An 86-amino-acid chain; its full sequence is Large ribosomal subunit protein eL43 (86 aa).

Residues 38 to 59 form a C4-type zinc finger; sequence CPVCGRKAVRRISTGIWQCQKC.

The protein belongs to the eukaryotic ribosomal protein eL43 family. Requires Zn(2+) as cofactor.

The chain is Large ribosomal subunit protein eL43 from Thermococcus gammatolerans (strain DSM 15229 / JCM 11827 / EJ3).